The primary structure comprises 72 residues: UPF0150 protein ssl0738 (72 aa).

Belongs to the UPF0150 family.

This is UPF0150 protein ssl0738 from Synechocystis sp. (strain ATCC 27184 / PCC 6803 / Kazusa).